A 407-amino-acid chain; its full sequence is Phosphopentomutase (407 aa).

Mn(2+)-binding residues include D10, D306, H311, D347, H348, and H359.

It belongs to the phosphopentomutase family. The cofactor is Mn(2+).

It is found in the cytoplasm. It catalyses the reaction 2-deoxy-alpha-D-ribose 1-phosphate = 2-deoxy-D-ribose 5-phosphate. It carries out the reaction alpha-D-ribose 1-phosphate = D-ribose 5-phosphate. It participates in carbohydrate degradation; 2-deoxy-D-ribose 1-phosphate degradation; D-glyceraldehyde 3-phosphate and acetaldehyde from 2-deoxy-alpha-D-ribose 1-phosphate: step 1/2. Its function is as follows. Isomerase that catalyzes the conversion of deoxy-ribose 1-phosphate (dRib-1-P) and ribose 1-phosphate (Rib-1-P) to deoxy-ribose 5-phosphate (dRib-5-P) and ribose 5-phosphate (Rib-5-P), respectively. The polypeptide is Phosphopentomutase (Serratia proteamaculans (strain 568)).